A 457-amino-acid chain; its full sequence is Cysteine--tRNA ligase (457 aa).

Position 31 (C31) interacts with Zn(2+). The short motif at 33–43 is the 'HIGH' region element; it reads PTVYNYAHIGN. Zn(2+) contacts are provided by C211, H236, and E240. The short motif at 269-273 is the 'KMSKS' region element; the sequence is KMSKS. K272 is an ATP binding site.

The protein belongs to the class-I aminoacyl-tRNA synthetase family. In terms of assembly, monomer. Requires Zn(2+) as cofactor.

It localises to the cytoplasm. The enzyme catalyses tRNA(Cys) + L-cysteine + ATP = L-cysteinyl-tRNA(Cys) + AMP + diphosphate. This Xanthomonas campestris pv. campestris (strain ATCC 33913 / DSM 3586 / NCPPB 528 / LMG 568 / P 25) protein is Cysteine--tRNA ligase.